We begin with the raw amino-acid sequence, 543 residues long: CTP synthase (543 aa).

Positions 1 to 265 (MARYIFITGG…DDEVLAAFGI (265 aa)) are amidoligase domain. S13 is a CTP binding site. S13 contacts UTP. Position 14–19 (14–19 (SLGKGL)) interacts with ATP. Residue Y54 coordinates L-glutamine. D71 contributes to the ATP binding site. Mg(2+)-binding residues include D71 and E139. CTP contacts are provided by residues 146-148 (DIE), 186-191 (KTKPTQ), and K222. Residues 186-191 (KTKPTQ) and K222 contribute to the UTP site. 238-240 (RDV) contacts ATP. The 252-residue stretch at 291–542 (TIAIVGKYTG…IQAAMVQSRL (252 aa)) folds into the Glutamine amidotransferase type-1 domain. Position 353 (G353) interacts with L-glutamine. The active-site Nucleophile; for glutamine hydrolysis is C380. L-glutamine contacts are provided by residues 381–384 (FGMQ), E404, and R470. Residues H515 and E517 contribute to the active site.

Belongs to the CTP synthase family. As to quaternary structure, homotetramer.

It catalyses the reaction UTP + L-glutamine + ATP + H2O = CTP + L-glutamate + ADP + phosphate + 2 H(+). The enzyme catalyses L-glutamine + H2O = L-glutamate + NH4(+). The catalysed reaction is UTP + NH4(+) + ATP = CTP + ADP + phosphate + 2 H(+). The protein operates within pyrimidine metabolism; CTP biosynthesis via de novo pathway; CTP from UDP: step 2/2. With respect to regulation, allosterically activated by GTP, when glutamine is the substrate; GTP has no effect on the reaction when ammonia is the substrate. The allosteric effector GTP functions by stabilizing the protein conformation that binds the tetrahedral intermediate(s) formed during glutamine hydrolysis. Inhibited by the product CTP, via allosteric rather than competitive inhibition. In terms of biological role, catalyzes the ATP-dependent amination of UTP to CTP with either L-glutamine or ammonia as the source of nitrogen. Regulates intracellular CTP levels through interactions with the four ribonucleotide triphosphates. This Bradyrhizobium diazoefficiens (strain JCM 10833 / BCRC 13528 / IAM 13628 / NBRC 14792 / USDA 110) protein is CTP synthase.